Here is a 104-residue protein sequence, read N- to C-terminus: MQKIRRDDEVIVIAGKDKGKRGKVLKVLADDRLVVGGVNLIKRHTKPNPMLGQQGGIVEKEAPLHVSNVAIFNTETSKADRVGFKVEDGKKIRVFKSTQKPVQA.

This sequence belongs to the universal ribosomal protein uL24 family. As to quaternary structure, part of the 50S ribosomal subunit.

In terms of biological role, one of two assembly initiator proteins, it binds directly to the 5'-end of the 23S rRNA, where it nucleates assembly of the 50S subunit. One of the proteins that surrounds the polypeptide exit tunnel on the outside of the subunit. The chain is Large ribosomal subunit protein uL24 from Pseudomonas aeruginosa (strain LESB58).